A 422-amino-acid chain; its full sequence is MQYLEIKGGKKLSGSVTISGAKNAALPVIAATILSDKDVTLTNLPNVVDIRTLLKLLTMLGGVVEHEGTVAKINNGSITSTKAVYEIVSQMRASILVLGPLLTRFGECEVSLPGGCAIGQRPIDLHLKALEAMGAKITIESGYVHAVAPNGLHGAKIIFDKITVGGTENIIMAAALAKGTTIIINAAKEPEIVQLCEMIADAGVKIEGIGTNELTIEGTDGIPLAFKTVEIIPDRIEAGTYLCAGAITKSEITLNKVNAEHIRASIDKLESMGFTFDIAKDSITIHPTDIINPVNLITIEYPGFPTDMQAQFMAVAAMADGESLIEERLFENRFMHVSELNRLGADIWLKGSVAAVKGVKELHGADVMATDLRASSALVLAGLVAEGTTNVRRIYHLDRGYDNLEGKLAALGADIVRKEEEK.

Phosphoenolpyruvate is bound at residue 22-23 (KN). R92 serves as a coordination point for UDP-N-acetyl-alpha-D-glucosamine. C116 functions as the Proton donor in the catalytic mechanism. The residue at position 116 (C116) is a 2-(S-cysteinyl)pyruvic acid O-phosphothioketal. Residues 121-125 (RPIDL), D307, and L329 each bind UDP-N-acetyl-alpha-D-glucosamine.

The protein belongs to the EPSP synthase family. MurA subfamily.

It is found in the cytoplasm. The enzyme catalyses phosphoenolpyruvate + UDP-N-acetyl-alpha-D-glucosamine = UDP-N-acetyl-3-O-(1-carboxyvinyl)-alpha-D-glucosamine + phosphate. It participates in cell wall biogenesis; peptidoglycan biosynthesis. Its function is as follows. Cell wall formation. Adds enolpyruvyl to UDP-N-acetylglucosamine. This Sulfurovum sp. (strain NBC37-1) protein is UDP-N-acetylglucosamine 1-carboxyvinyltransferase.